The sequence spans 109 residues: Nucleoid-associated protein CGSHiEE_00780 (109 aa).

The protein belongs to the YbaB/EbfC family. Homodimer.

It is found in the cytoplasm. The protein localises to the nucleoid. In terms of biological role, binds to DNA and alters its conformation. May be involved in regulation of gene expression, nucleoid organization and DNA protection. This is Nucleoid-associated protein CGSHiEE_00780 from Haemophilus influenzae (strain PittEE).